Reading from the N-terminus, the 267-residue chain is Tryptophan synthase alpha chain (267 aa).

Active-site proton acceptor residues include Glu44 and Asp55.

The protein belongs to the TrpA family. As to quaternary structure, tetramer of two alpha and two beta chains.

The catalysed reaction is (1S,2R)-1-C-(indol-3-yl)glycerol 3-phosphate + L-serine = D-glyceraldehyde 3-phosphate + L-tryptophan + H2O. Its pathway is amino-acid biosynthesis; L-tryptophan biosynthesis; L-tryptophan from chorismate: step 5/5. In terms of biological role, the alpha subunit is responsible for the aldol cleavage of indoleglycerol phosphate to indole and glyceraldehyde 3-phosphate. The sequence is that of Tryptophan synthase alpha chain from Coxiella burnetii (strain Dugway 5J108-111).